The chain runs to 397 residues: Golgi-associated RAB2 interactor protein 2 (397 aa).

2 disordered regions span residues 1–24 and 342–397; these read MKKS…PDSK and QTTL…KLLN. Basic and acidic residues-rich tracts occupy residues 10 to 24, 353 to 369, and 376 to 397; these read TRID…PDSK, EKSK…RTMD, and KAEE…KLLN.

It belongs to the GARIN family. As to quaternary structure, interacts with CALM1.

It localises to the cell projection. It is found in the cilium. The protein localises to the flagellum. In terms of biological role, seems to play a role in sperm motility. The protein is Golgi-associated RAB2 interactor protein 2 (GARIN2) of Bos taurus (Bovine).